Reading from the N-terminus, the 376-residue chain is Heat stress transcription factor A-2a (376 aa).

The disordered stretch occupies residues 137–168 (LKTIKRRRPPPSSPPSSSSSSSSSQHQQQPAA). Over residues 151–160 (PSSSSSSSSS) the composition is skewed to low complexity. Residues 182–229 (VNRLQRDKSVLIAEVVKLRQEQQTTRAQMQAMEERISAAEQKQQQMTV) adopt a coiled-coil conformation. The hydrophobic repeat HR-A/B stretch occupies residues 185–235 (LQRDKSVLIAEVVKLRQEQQTTRAQMQAMEERISAAEQKQQQMTVFLARAM). A Nuclear localization signal motif is present at residues 265–269 (KKRRR). Disordered stretches follow at residues 296–319 (VAEP…DTES) and 332–362 (KQRE…DDDD). Positions 307-316 (GDGGGGGGGD) are enriched in gly residues. Residues 318–325 (ESFWMQLL) carry the AHA motif. Positions 352-362 (VDNDEEDDDDD) are enriched in acidic residues. The Nuclear export signal motif lies at 366 to 373 (LVQSIYHL).

Belongs to the HSF family. Class A subfamily. As to quaternary structure, homotrimer. Post-translationally, exhibits temperature-dependent phosphorylation.

Its subcellular location is the cytoplasm. The protein localises to the nucleus. Transcriptional regulator that specifically binds DNA of heat shock promoter elements (HSE). The sequence is that of Heat stress transcription factor A-2a (HSFA2A) from Oryza sativa subsp. japonica (Rice).